A 177-amino-acid polypeptide reads, in one-letter code: Large ribosomal subunit protein uL6 (177 aa).

It belongs to the universal ribosomal protein uL6 family. As to quaternary structure, part of the 50S ribosomal subunit.

This protein binds to the 23S rRNA, and is important in its secondary structure. It is located near the subunit interface in the base of the L7/L12 stalk, and near the tRNA binding site of the peptidyltransferase center. The polypeptide is Large ribosomal subunit protein uL6 (Cereibacter sphaeroides (strain ATCC 17029 / ATH 2.4.9) (Rhodobacter sphaeroides)).